The chain runs to 231 residues: MVVEDTQKSSITDDQITANPNNENEDLEEGEILDDDDSSATSRPPSSSGALARNPHPLENSWTFWFDNPSAKSKQAAWGSSIRPIYTFATVEEFWSIYNNIHHPSKLAVGADFHCFKHKIEPKWEDPICANGGKWTMTFPRGKSDTSWLYTLLGMIGEQFDHGDEICGAVVNVRNRQEKIALWTKNAANEAAQVSIGKQWKEFLDYNDTIGFIFHEDAKKHDRAAKNKYVI.

The interval 1–55 (MVVEDTQKSSITDDQITANPNNENEDLEEGEILDDDDSSATSRPPSSSGALARNP) is disordered. The span at 8–18 (KSSITDDQITA) shows a compositional bias: polar residues. Positions 23 to 38 (ENEDLEEGEILDDDDS) are enriched in acidic residues. The segment covering 39 to 48 (SATSRPPSSS) has biased composition (low complexity). 2 EIF4G-binding regions span residues 56–59 (HPLE) and 66–102 (FDNPSAKSKQAAWGSSIRPIYTFATVEEFWSIYNNIH). MRNA-binding positions include 74–79 (KQAAWG), Lys106, and 124–125 (WE). Residues Cys129 and Cys167 are joined by a disulfide bond. Residues 150-159 (YTLLGMIGEQ) form an EIF4G-binding region. Residues 174-179 (RNRQEK) and 219-223 (KKHDR) contribute to the mRNA site.

The protein belongs to the eukaryotic initiation factor 4E family. In terms of assembly, EIF4F is a multi-subunit complex, the composition of which varies with external and internal environmental conditions. It is composed of at least EIF4A, EIF4E and EIF4G. EIF4E is also known to interact with other partners. In higher plants two isoforms of EIF4F have been identified, named isoform EIF4F and isoform EIF(iso)4F. Isoform EIF4F has subunits p220 and p26, whereas isoform EIF(iso)4F has subunits p82 and p28. (Microbial infection) Interacts with potyvirus peanut stripe virus (PStV) helper component proteinase (HC-Pro) in the cytoplasm and with PStV viral genome-linked protein (VPg) in the nucleus; these interactions are possible in susceptible hosts but impaired in resistant plants. Post-translationally, according to the redox status, the Cys-129-Cys-167 disulfide bridge may have a role in regulating protein function by affecting its ability to bind capped mRNA. As to expression, expressed ubiquitously with highest levels in young leaves and roots, and lowest levels in flowers.

It localises to the nucleus. The protein localises to the cytoplasm. Its function is as follows. Component of the protein complex eIF4F, which is involved in the recognition of the mRNA cap, ATP-dependent unwinding of 5'-terminal secondary structure and recruitment of mRNA to the ribosome. Recognizes and binds the 7-methylguanosine-containing mRNA cap during an early step in the initiation of protein synthesis and facilitates ribosome binding by inducing the unwinding of the mRNAs secondary structures. Key component of recessive resistance to potyviruses such as peanut stripe virus (PStV). Functionally, (Microbial infection) Susceptibility host factor required for viral infection by recruiting viral RNAs to the host ribosomal complex via an interaction with viral genome-linked protein (VPg). In Arachis hypogaea (Peanut), this protein is Eukaryotic translation initiation factor 4E-1.